A 506-amino-acid chain; its full sequence is Histidine ammonia-lyase (506 aa).

The segment at residues 142-144 is a cross-link (5-imidazolinone (Ala-Gly)); the sequence is ASG. Ser-143 is subject to 2,3-didehydroalanine (Ser).

It belongs to the PAL/histidase family. Contains an active site 4-methylidene-imidazol-5-one (MIO), which is formed autocatalytically by cyclization and dehydration of residues Ala-Ser-Gly.

The protein resides in the cytoplasm. The catalysed reaction is L-histidine = trans-urocanate + NH4(+). The protein operates within amino-acid degradation; L-histidine degradation into L-glutamate; N-formimidoyl-L-glutamate from L-histidine: step 1/3. The chain is Histidine ammonia-lyase from Bacillus cereus (strain B4264).